A 46-amino-acid chain; its full sequence is uncharacterized protein (46 aa).

This is an uncharacterized protein from Escherichia coli (strain K12).